We begin with the raw amino-acid sequence, 318 residues long: Aspartate carbamoyltransferase catalytic subunit (318 aa).

2 residues coordinate carbamoyl phosphate: Arg-67 and Thr-68. Lys-95 is a binding site for L-aspartate. Arg-117, His-145, and Gln-148 together coordinate carbamoyl phosphate. L-aspartate contacts are provided by Arg-178 and Arg-236. Residues Gly-277 and Pro-278 each coordinate carbamoyl phosphate.

This sequence belongs to the aspartate/ornithine carbamoyltransferase superfamily. ATCase family. In terms of assembly, heterododecamer (2C3:3R2) of six catalytic PyrB chains organized as two trimers (C3), and six regulatory PyrI chains organized as three dimers (R2).

The catalysed reaction is carbamoyl phosphate + L-aspartate = N-carbamoyl-L-aspartate + phosphate + H(+). It functions in the pathway pyrimidine metabolism; UMP biosynthesis via de novo pathway; (S)-dihydroorotate from bicarbonate: step 2/3. Functionally, catalyzes the condensation of carbamoyl phosphate and aspartate to form carbamoyl aspartate and inorganic phosphate, the committed step in the de novo pyrimidine nucleotide biosynthesis pathway. This chain is Aspartate carbamoyltransferase catalytic subunit, found in Roseiflexus sp. (strain RS-1).